A 369-amino-acid polypeptide reads, in one-letter code: Translocating chain-associated membrane protein 1-like 1 (369 aa).

The Cytoplasmic segment spans residues 1–29; sequence MGLRKKSTKNPPVLSQEFILQNHADIVSC. The helical transmembrane segment at 30–50 threads the bilayer; that stretch reads VGMFFLLGLVFEGTAEASIVF. At 51–81 the chain is on the lumenal side; the sequence is LTLQHSVAVPAAEEQATGSKSLYYYGVKDLA. The helical transmembrane segment at 82 to 102 threads the bilayer; the sequence is TVFFYMLVAIIIHATIQEYVL. At 103–121 the chain is on the cytoplasmic side; it reads DKINKRMQFTKAKQNKFNE. The TLC domain maps to 117–326; the sequence is NKFNESGQFS…TLWLQRWVED (210 aa). Residues 122–142 form a helical membrane-spanning segment; it reads SGQFSVFYFFSCIWGTFILIS. The Lumenal segment spans residues 143–164; that stretch reads ENCLSDPTLIWKARPHSMMTFQ. Residues 165–185 form a helical membrane-spanning segment; sequence MKFFYISQLAYWFHAFPELYF. Residues 186-196 lie on the Cytoplasmic side of the membrane; sequence QKTKKQDIPRQ. The chain crosses the membrane as a helical span at residues 197–215; the sequence is LVYIGLHLFHITGAYLLYL. The Lumenal portion of the chain corresponds to 216–219; that stretch reads NHLG. Residues 220–242 traverse the membrane as a helical segment; the sequence is LLLLVLHYFVELLSHMCGLFYFS. At 243–249 the chain is on the cytoplasmic side; sequence DEKYQKG. The chain crosses the membrane as a helical span at residues 250 to 270; it reads ISLWAIVFILGRLVTLIVSVL. At 271–297 the chain is on the lumenal side; that stretch reads TVGFHLAGSQNRNPDALTGNVNVLAAK. Residues 298-318 form a helical membrane-spanning segment; the sequence is IAVLSSSCTIQAYVTWNLITL. Residues 319 to 369 are Cytoplasmic-facing; the sequence is WLQRWVEDSNIQASCMKKKRSRSSKKRTENGVGVETSNRVDCPPKRKEKSS. The interval 335 to 369 is disordered; sequence KKKRSRSSKKRTENGVGVETSNRVDCPPKRKEKSS. A compositionally biased stretch (basic and acidic residues) spans 360-369; the sequence is CPPKRKEKSS.

This sequence belongs to the TRAM family.

It is found in the endoplasmic reticulum membrane. Its function is as follows. Stimulatory or required for the translocation of secretory proteins across the ER membrane. In Homo sapiens (Human), this protein is Translocating chain-associated membrane protein 1-like 1 (TRAM1L1).